Reading from the N-terminus, the 664-residue chain is Methionine--tRNA ligase (664 aa).

Positions 15–25 (YYPSGKAHIGH) match the 'HIGH' region motif. The 'KMSKS' region signature appears at 310-314 (KMSKS). Lys-313 serves as a coordination point for ATP. Positions 563-664 (DFDKIDLRVA…SALPNGAKVK (102 aa)) constitute a tRNA-binding domain.

The protein belongs to the class-I aminoacyl-tRNA synthetase family. MetG type 2B subfamily. In terms of assembly, homodimer.

The protein resides in the cytoplasm. It carries out the reaction tRNA(Met) + L-methionine + ATP = L-methionyl-tRNA(Met) + AMP + diphosphate. Is required not only for elongation of protein synthesis but also for the initiation of all mRNA translation through initiator tRNA(fMet) aminoacylation. The polypeptide is Methionine--tRNA ligase (metG) (Listeria innocua serovar 6a (strain ATCC BAA-680 / CLIP 11262)).